The chain runs to 420 residues: Zinc finger and BTB domain-containing protein 42 (420 aa).

A BTB domain is found at 24 to 92 (CDCTVLVGDA…MYEGRLDLHS (69 aa)). 2 disordered regions span residues 174 to 204 (PPSW…HPPC) and 216 to 248 (QGAQ…PPVC). The segment covering 227-241 (DSFSEQDSSSPQSAD) has biased composition (low complexity). 4 consecutive C2H2-type zinc fingers follow at residues 292-314 (CICP…LSAH), 332-354 (PTCP…ERTH), 360-382 (YTCV…AVVH), and 388-411 (HACR…RKFH).

It belongs to the krueppel C2H2-type zinc-finger protein family. ZBTB18 subfamily.

It localises to the cytoplasm. The protein resides in the nucleus. Its subcellular location is the nucleoplasm. Its function is as follows. Transcriptional repressor. Specifically binds DNA and probably acts by recruiting chromatin remodeling multiprotein complexes. The polypeptide is Zinc finger and BTB domain-containing protein 42 (Zbtb42) (Rattus norvegicus (Rat)).